Consider the following 439-residue polypeptide: Omega-aminotransferase (439 aa).

Residue 112–113 (GS) participates in pyridoxal 5'-phosphate binding. Residue Lys-281 is modified to N6-(pyridoxal phosphate)lysine. Thr-318 contributes to the pyridoxal 5'-phosphate binding site.

It belongs to the class-III pyridoxal-phosphate-dependent aminotransferase family. As to quaternary structure, homotetramer. Requires pyridoxal 5'-phosphate as cofactor.

It carries out the reaction 3-oxopropanoate + L-alanine = beta-alanine + pyruvate. It catalyses the reaction 3-aminobutanoate + pyruvate = acetoacetate + L-alanine. The enzyme catalyses benzylamine + pyruvate = benzaldehyde + L-alanine. The catalysed reaction is (S)-1-phenylethylamine + pyruvate = acetophenone + L-alanine. It carries out the reaction 2-phenylethylamine + pyruvate = 2-phenylacetaldehyde + L-alanine. It catalyses the reaction 1-phenylpropylamine + pyruvate = 1-phenylpropan-1-one + L-alanine. The enzyme catalyses 3-phenylpropylamine + pyruvate = 3-phenylpropanal + L-alanine. Aminotransferase that can use beta-amino acids, aliphatic amines, or aromatic amines as amino donors, and pyruvate as amino acceptor. Shows high activity for short-chain beta-amino acids, with the highest activity for 3-aminobutanoate and beta-alanine in vitro. Displays higher activity toward aromatic amines than aliphatic amines. May be involved in beta-alanine biosynthesis and/or degradation. The polypeptide is Omega-aminotransferase (Caulobacter vibrioides (strain ATCC 19089 / CIP 103742 / CB 15) (Caulobacter crescentus)).